The primary structure comprises 188 residues: dCTP deaminase (188 aa).

DCTP-binding positions include 111-116 (KSTYAR), 135-137 (TLE), glutamine 156, tyrosine 170, and glutamine 180. Glutamate 137 acts as the Proton donor/acceptor in catalysis.

Belongs to the dCTP deaminase family. In terms of assembly, homotrimer.

The enzyme catalyses dCTP + H2O + H(+) = dUTP + NH4(+). It functions in the pathway pyrimidine metabolism; dUMP biosynthesis; dUMP from dCTP (dUTP route): step 1/2. Catalyzes the deamination of dCTP to dUTP. In Francisella tularensis subsp. tularensis (strain FSC 198), this protein is dCTP deaminase.